A 1462-amino-acid chain; its full sequence is MGARNSVLRGKKADELEKVRLRPNGKKRYRLKHVVWAANELDRFGLAESLLESKEGCQKILKVLEPLVPTGSENLKSLFNTVCVIWCLHAEEKVKDTEEAKKLAQRHLVAETGTAEKMPNISRPTAPPSGKGGNFPVQQAGGNYIHVPLSPRTLNAWVKLVEEKKFGAEVVPGFQALSEGCTPYDINQMLNCVGDHQAAMQIIREIINEEAADWDAQHPIPGPLPAGQLRDPRGSDIAGTTSTVDEQIQWMYRQPNPVPVGNIYRRWIQIGLQKCVRMYNPTNILDVKQGPKESFQSYVDRFYKSLRAEQTDPAVKNWMTQTLLIQNANPDCKLVLKGLGMNPTLEEMLTACQGVGGPSQKARLMAEALKEALTPAPIPFAAAQQRRAIRCWNCGKEGHSAKQCRAPRRQGCWKCGKSGHIMANCPERQAGFLDGPTGKAAPQLPRGPSSSGADTNSTPNRSSSGPVGEIYAAREKAERAEGETIQGGDGGLTAPRAGRDAPQRGDRGLATPQFSLWKRPVVTAFIEDQPVEVLLDTGADDSIVAGIELGDNYTPKIVGGIGGFINTKEYKNVEIKVLNKRVRATIMTGDTPINIFGRNILATLGMSLNLPVAKLDPIKVTLKPGKDGPRLKQWPLTKEKIEALKEICEKMEREGQLEEAPPTNPYNTPTFAIKKKDKNKWRMLIDFRELNRVTQDFTEIQLGIPHPAGLAKKKRITVLDVGDAYFSIPLHEDFRQYTAFTLPSVNNAEPEKRYVYKVLPQGWKGSPAIFQFMMRQILEPFRKANPDVILIQYMDDILIASDRTGLEHDKVVLQLKELLNGLGFSTPDEKFQKDPPFQWMGYELWPTKWKLQKIQLPQKEIWTVNDIQKLVGVLNWAAQIYPGIKTKHLCKLIRGKMTLTEEVQWTELAEAELEENKIILSQEQEGSYYQEEEELEATVIKSQDNQWAYKIHQGERVLKVGKYAKIKNTHTNGVRLLAQVVQKIGKEALVIWGRVPKFHLPVERDTWEQWWDNYWQVTWVPEWDFVSTPPLVRLTFNLVGDPIPGTETFYTDGSCNRQSKEGKAGYVTDRGRDRVRVLEQTSNQQAELEAFAMALADSGPKVNIIVDSQYVMGIVAGQPTESENRIVNQIIEDMIKKEAVYVAWVPAHKGIGGNQEVDHLVSQGIRQVLFLEKIEPAQEEHEKYHSNIKELTHKFGIPQLVARQIVNTCAQCQQKGEAIHGQVNAEIGVWQMDCTHLEGKIIIVAVHVASGFIEAEVIPQESGRQTALFLLKLASRWPITHLHTDNGPNFTSQEVKMVAWWIGIEQSFGVPYNPQSQGVVEAMNHHLKNQISRIREQANTIETIVLMAVHCMNFKRRGGIGDMTPAERLINMITTEQEIQFLQRKNSNFKKFQVYYREGRDQLWKGPGELLWKGDGAVIVKVGADIKVVPRRKAKIIRDYGGRQELDSSSHLEGAREDGEVA.

Residue glycine 2 is the site of N-myristoyl glycine; by host attachment. Residues 7–31 form an interaction with Gp41 region; that stretch reads VLRGKKADELEKVRLRPNGKKRYRL. Positions 16–22 match the Nuclear export signal motif; it reads LEKVRLR. Residues 26–32 carry the Nuclear localization signal motif; that stretch reads KKRYRLK. The interval 191–228 is interaction with human PPIA/CYPA and NUP153; the sequence is NCVGDHQAAMQIIREIINEEAADWDAQHPIPGPLPAGQ. The dimerization/Multimerization of capsid protein p24 stretch occupies residues 279–365; sequence YNPTNILDVK…GGPSQKARLM (87 aa). CCHC-type zinc fingers lie at residues 389–406 and 410–427; these read IRCWNCGKEGHSAKQCRA and QGCWKCGKSGHIMANCPE. Positions 433–509 are disordered; sequence LDGPTGKAAP…DAPQRGDRGL (77 aa). Residues 448 to 465 are compositionally biased toward polar residues; sequence PSSSGADTNSTPNRSSSG. 2 stretches are compositionally biased toward basic and acidic residues: residues 472–482 and 497–507; these read AAREKAERAEG and AGRDAPQRGDR. The dimerization of protease stretch occupies residues 512 to 516; sequence PQFSL. The region spanning 532-601 is the Peptidase A2 domain; it reads EVLLDTGADD…PINIFGRNIL (70 aa). Residue aspartate 536 is the For protease activity; shared with dimeric partner of the active site. 2 dimerization of protease regions span residues 560–566 and 599–611; these read GIGGFIN and NILATLGMSLNLP. One can recognise a Reverse transcriptase domain in the interval 655-845; sequence GQLEEAPPTN…PFQWMGYELW (191 aa). Mg(2+) contacts are provided by aspartate 720, aspartate 795, and aspartate 796. The RT 'primer grip' stretch occupies residues 837-845; sequence FQWMGYELW. The short motif at 1007-1023 is the Tryptophan repeat motif element; that stretch reads WEQWWDNYWQVTWVPEW. Residues 1043 to 1166 enclose the RNase H type-1 domain; sequence IPGTETFYTD…VDHLVSQGIR (124 aa). Mg(2+)-binding residues include aspartate 1052, glutamate 1087, aspartate 1107, and aspartate 1158. Residues 1172 to 1213 form an Integrase-type zinc finger; the sequence is EKIEPAQEEHEKYHSNIKELTHKFGIPQLVARQIVNTCAQCQ. Zn(2+) contacts are provided by histidine 1181, histidine 1185, cysteine 1209, and cysteine 1212. The region spanning 1223–1374 is the Integrase catalytic domain; it reads VNAEIGVWQM…PAERLINMIT (152 aa). Residues aspartate 1233, aspartate 1285, and glutamate 1321 each contribute to the Mg(2+) site. The segment at residues 1392-1439 is a DNA-binding region (integrase-type); the sequence is FQVYYREGRDQLWKGPGELLWKGDGAVIVKVGADIKVVPRRKAKIIRD.

In terms of assembly, homotrimer; further assembles as hexamers of trimers. Interacts with gp41 (via C-terminus). Interacts with host CALM1; this interaction induces a conformational change in the Matrix protein, triggering exposure of the myristate group. Interacts with host AP3D1; this interaction allows the polyprotein trafficking to multivesicular bodies during virus assembly. Part of the pre-integration complex (PIC) which is composed of viral genome, matrix protein, Vpr and integrase. As to quaternary structure, homodimer; the homodimer further multimerizes as homohexamers or homopentamers. Interacts with human PPIA/CYPA. Interacts with human NUP153. Interacts with host PDZD8; this interaction stabilizes the capsid. Interacts with monkey TRIM5; this interaction destabilizes the capsid. Homodimer, whose active site consists of two apposed aspartic acid residues. In terms of assembly, heterodimer of p66 RT and p51 RT (RT p66/p51). Heterodimerization of RT is essential for DNA polymerase activity. The overall folding of the subdomains is similar in p66 RT and p51 RT but the spatial arrangements of the subdomains are dramatically different. As to quaternary structure, homotetramer; may further associate as a homohexadecamer. Part of the pre-integration complex (PIC) which is composed of viral genome, matrix protein, Vpr and integrase. Interacts with human SMARCB1/INI1 and human PSIP1/LEDGF isoform 1. Interacts with human KPNA3; this interaction might play a role in nuclear import of the pre-integration complex. Interacts with human NUP153; this interaction might play a role in nuclear import of the pre-integration complex. The cofactor is Mg(2+). Post-translationally, specific enzymatic cleavages by the viral protease yield mature proteins. The protease is released by autocatalytic cleavage. The polyprotein is cleaved during and after budding, this process is termed maturation. Proteolytic cleavage of p66 RT removes the RNase H domain to yield the p51 RT subunit. Nucleocapsid protein p7 might be further cleaved after virus entry.

The protein localises to the host cell membrane. The protein resides in the host endosome. Its subcellular location is the host multivesicular body. It localises to the virion membrane. It is found in the host nucleus. The protein localises to the host cytoplasm. The protein resides in the virion. It carries out the reaction Endopeptidase for which the P1 residue is preferably hydrophobic.. The catalysed reaction is Endohydrolysis of RNA in RNA/DNA hybrids. Three different cleavage modes: 1. sequence-specific internal cleavage of RNA. Human immunodeficiency virus type 1 and Moloney murine leukemia virus enzymes prefer to cleave the RNA strand one nucleotide away from the RNA-DNA junction. 2. RNA 5'-end directed cleavage 13-19 nucleotides from the RNA end. 3. DNA 3'-end directed cleavage 15-20 nucleotides away from the primer terminus.. The enzyme catalyses 3'-end directed exonucleolytic cleavage of viral RNA-DNA hybrid.. It catalyses the reaction DNA(n) + a 2'-deoxyribonucleoside 5'-triphosphate = DNA(n+1) + diphosphate. Protease: The viral protease is inhibited by many synthetic protease inhibitors (PIs), such as amprenavir, atazanavir, indinavir, loprinavir, nelfinavir, ritonavir and saquinavir. Use of protease inhibitors in tritherapy regimens permit more ambitious therapeutic strategies. Reverse transcriptase/ribonuclease H: RT can be inhibited either by nucleoside RT inhibitors (NRTIs) or by non nucleoside RT inhibitors (NNRTIs). NRTIs act as chain terminators, whereas NNRTIs inhibit DNA polymerization by binding a small hydrophobic pocket near the RT active site and inducing an allosteric change in this region. Classical NRTIs are abacavir, adefovir (PMEA), didanosine (ddI), lamivudine (3TC), stavudine (d4T), tenofovir (PMPA), zalcitabine (ddC), and zidovudine (AZT). Classical NNRTIs are atevirdine (BHAP U-87201E), delavirdine, efavirenz (DMP-266), emivirine (I-EBU), and nevirapine (BI-RG-587). The tritherapies used as a basic effective treatment of AIDS associate two NRTIs and one NNRTI. Its function is as follows. Mediates, with Gag polyprotein, the essential events in virion assembly, including binding the plasma membrane, making the protein-protein interactions necessary to create spherical particles, recruiting the viral Env proteins, and packaging the genomic RNA via direct interactions with the RNA packaging sequence (Psi). Gag-Pol polyprotein may regulate its own translation, by the binding genomic RNA in the 5'-UTR. At low concentration, the polyprotein would promote translation, whereas at high concentration, the polyprotein would encapsidate genomic RNA and then shut off translation. In terms of biological role, targets the polyprotein to the plasma membrane via a multipartite membrane-binding signal, that includes its myristoylated N-terminus. Matrix protein is part of the pre-integration complex. Implicated in the release from host cell mediated by Vpu. Binds to RNA. Functionally, forms the conical core that encapsulates the genomic RNA-nucleocapsid complex in the virion. Most core are conical, with only 7% tubular. The core is constituted by capsid protein hexamer subunits. The core is disassembled soon after virion entry. Host restriction factors such as TRIM5-alpha or TRIMCyp bind retroviral capsids and cause premature capsid disassembly, leading to blocks in reverse transcription. Capsid restriction by TRIM5 is one of the factors which restricts HIV-1 to the human species. Host PIN1 apparently facilitates the virion uncoating. On the other hand, interactions with PDZD8 or CYPA stabilize the capsid. Encapsulates and protects viral dimeric unspliced genomic RNA (gRNA). Binds these RNAs through its zinc fingers. Acts as a nucleic acid chaperone which is involved in rearangement of nucleic acid secondary structure during gRNA retrotranscription. Also facilitates template switch leading to recombination. As part of the polyprotein, participates in gRNA dimerization, packaging, tRNA incorporation and virion assembly. Its function is as follows. Aspartyl protease that mediates proteolytic cleavages of Gag and Gag-Pol polyproteins during or shortly after the release of the virion from the plasma membrane. Cleavages take place as an ordered, step-wise cascade to yield mature proteins. This process is called maturation. Displays maximal activity during the budding process just prior to particle release from the cell. Also cleaves Nef and Vif, probably concomitantly with viral structural proteins on maturation of virus particles. Hydrolyzes host EIF4GI and PABP1 in order to shut off the capped cellular mRNA translation. The resulting inhibition of cellular protein synthesis serves to ensure maximal viral gene expression and to evade host immune response. In terms of biological role, multifunctional enzyme that converts the viral RNA genome into dsDNA in the cytoplasm, shortly after virus entry into the cell. This enzyme displays a DNA polymerase activity that can copy either DNA or RNA templates, and a ribonuclease H (RNase H) activity that cleaves the RNA strand of RNA-DNA heteroduplexes in a partially processive 3' to 5' endonucleasic mode. Conversion of viral genomic RNA into dsDNA requires many steps. A tRNA(3)-Lys binds to the primer-binding site (PBS) situated at the 5'-end of the viral RNA. RT uses the 3' end of the tRNA primer to perform a short round of RNA-dependent minus-strand DNA synthesis. The reading proceeds through the U5 region and ends after the repeated (R) region which is present at both ends of viral RNA. The portion of the RNA-DNA heteroduplex is digested by the RNase H, resulting in a ssDNA product attached to the tRNA primer. This ssDNA/tRNA hybridizes with the identical R region situated at the 3' end of viral RNA. This template exchange, known as minus-strand DNA strong stop transfer, can be either intra- or intermolecular. RT uses the 3' end of this newly synthesized short ssDNA to perform the RNA-dependent minus-strand DNA synthesis of the whole template. RNase H digests the RNA template except for two polypurine tracts (PPTs) situated at the 5'-end and near the center of the genome. It is not clear if both polymerase and RNase H activities are simultaneous. RNase H probably can proceed both in a polymerase-dependent (RNA cut into small fragments by the same RT performing DNA synthesis) and a polymerase-independent mode (cleavage of remaining RNA fragments by free RTs). Secondly, RT performs DNA-directed plus-strand DNA synthesis using the PPTs that have not been removed by RNase H as primers. PPTs and tRNA primers are then removed by RNase H. The 3' and 5' ssDNA PBS regions hybridize to form a circular dsDNA intermediate. Strand displacement synthesis by RT to the PBS and PPT ends produces a blunt ended, linear dsDNA copy of the viral genome that includes long terminal repeats (LTRs) at both ends. Functionally, catalyzes viral DNA integration into the host chromosome, by performing a series of DNA cutting and joining reactions. This enzyme activity takes place after virion entry into a cell and reverse transcription of the RNA genome in dsDNA. The first step in the integration process is 3' processing. This step requires a complex comprising the viral genome, matrix protein, Vpr and integrase. This complex is called the pre-integration complex (PIC). The integrase protein removes 2 nucleotides from each 3' end of the viral DNA, leaving recessed CA OH's at the 3' ends. In the second step, the PIC enters cell nucleus. This process is mediated through integrase and Vpr proteins, and allows the virus to infect a non dividing cell. This ability to enter the nucleus is specific of lentiviruses, other retroviruses cannot and rely on cell division to access cell chromosomes. In the third step, termed strand transfer, the integrase protein joins the previously processed 3' ends to the 5' ends of strands of target cellular DNA at the site of integration. The 5'-ends are produced by integrase-catalyzed staggered cuts, 5 bp apart. A Y-shaped, gapped, recombination intermediate results, with the 5'-ends of the viral DNA strands and the 3' ends of target DNA strands remaining unjoined, flanking a gap of 5 bp. The last step is viral DNA integration into host chromosome. This involves host DNA repair synthesis in which the 5 bp gaps between the unjoined strands are filled in and then ligated. Since this process occurs at both cuts flanking the HIV genome, a 5 bp duplication of host DNA is produced at the ends of HIV-1 integration. Alternatively, Integrase may catalyze the excision of viral DNA just after strand transfer, this is termed disintegration. In Human immunodeficiency virus type 2 subtype A (isolate D194) (HIV-2), this protein is Gag-Pol polyprotein (gag-pol).